The chain runs to 855 residues: Transcription factor gaf1 (855 aa).

Positions 72–112 (KNLTPNGDSNTLTPDTFSDPTAPSSAQSVPPTSSAETTADN) are enriched in polar residues. Disordered stretches follow at residues 72 to 126 (KNLT…PAYS), 149 to 184 (TSFD…ESQP), 229 to 287 (SHNL…GFPS), 412 to 483 (PNSN…DMFS), 602 to 643 (NKNA…TRTT), and 680 to 768 (KKRN…SQSM). A compositionally biased stretch (basic and acidic residues) spans 149–168 (TSFDESTAKSKKRSIADSHF). Ser-150 is subject to Phosphoserine. 2 stretches are compositionally biased toward low complexity: residues 240 to 250 (PANSNNSASPN) and 428 to 444 (NSSK…DSNQ). Over residues 445-476 (ENAESFNPSISSHNSAEWASGETTGHSSNSPL) the composition is skewed to polar residues. The span at 614 to 623 (AEDKKGDANT) shows a compositional bias: basic and acidic residues. Composition is skewed to low complexity over residues 625-643 (RANA…TRTT) and 707-717 (SKSSSAKSTAA). The GATA-type zinc finger occupies 635–659 (CTNCQTRTTPLWRRSPDGQPLCNAC). Residues Ser-727 and Ser-729 each carry the phosphoserine modification. Over residues 755–767 (QQQSSENESKSQS) the composition is skewed to low complexity.

The protein resides in the nucleus. In terms of biological role, transcriptional activator. The polypeptide is Transcription factor gaf1 (gaf1) (Schizosaccharomyces pombe (strain 972 / ATCC 24843) (Fission yeast)).